A 239-amino-acid polypeptide reads, in one-letter code: Ribonuclease PH (239 aa).

Phosphate-binding positions include R86 and 124–126 (GTR).

The protein belongs to the RNase PH family. As to quaternary structure, homohexameric ring arranged as a trimer of dimers.

The catalysed reaction is tRNA(n+1) + phosphate = tRNA(n) + a ribonucleoside 5'-diphosphate. Functionally, phosphorolytic 3'-5' exoribonuclease that plays an important role in tRNA 3'-end maturation. Removes nucleotide residues following the 3'-CCA terminus of tRNAs; can also add nucleotides to the ends of RNA molecules by using nucleoside diphosphates as substrates, but this may not be physiologically important. Probably plays a role in initiation of 16S rRNA degradation (leading to ribosome degradation) during starvation. This Rickettsia felis (strain ATCC VR-1525 / URRWXCal2) (Rickettsia azadi) protein is Ribonuclease PH.